The sequence spans 602 residues: DNA mismatch repair protein MutL (602 aa).

Belongs to the DNA mismatch repair MutL/HexB family.

Functionally, this protein is involved in the repair of mismatches in DNA. It is required for dam-dependent methyl-directed DNA mismatch repair. May act as a 'molecular matchmaker', a protein that promotes the formation of a stable complex between two or more DNA-binding proteins in an ATP-dependent manner without itself being part of a final effector complex. This is DNA mismatch repair protein MutL from Geotalea uraniireducens (strain Rf4) (Geobacter uraniireducens).